Consider the following 250-residue polypeptide: uncharacterized protein (250 aa).

It to class-3 of adenylyl cyclases.

This is an uncharacterized protein from Mycobacterium tuberculosis (strain ATCC 25618 / H37Rv).